We begin with the raw amino-acid sequence, 362 residues long: 3-dehydroquinate synthase (362 aa).

NAD(+) contacts are provided by residues 74-79 (DGEEHK), 108-112 (GVTGD), 132-133 (TT), Lys145, and Lys154. Residues Glu187, His250, and His267 each coordinate Zn(2+).

The protein belongs to the sugar phosphate cyclases superfamily. Dehydroquinate synthase family. Co(2+) is required as a cofactor. Zn(2+) serves as cofactor. The cofactor is NAD(+).

The protein localises to the cytoplasm. The enzyme catalyses 7-phospho-2-dehydro-3-deoxy-D-arabino-heptonate = 3-dehydroquinate + phosphate. It participates in metabolic intermediate biosynthesis; chorismate biosynthesis; chorismate from D-erythrose 4-phosphate and phosphoenolpyruvate: step 2/7. Its function is as follows. Catalyzes the conversion of 3-deoxy-D-arabino-heptulosonate 7-phosphate (DAHP) to dehydroquinate (DHQ). In Syntrophotalea carbinolica (strain DSM 2380 / NBRC 103641 / GraBd1) (Pelobacter carbinolicus), this protein is 3-dehydroquinate synthase.